The sequence spans 62 residues: Small ribosomal subunit protein eS27 (62 aa).

4 residues coordinate Zn(2+): Cys-17, Cys-20, Cys-36, and Cys-39. Residues 17–39 (CPDCDNEQTVFSKASTTVKCVVC) form a C4-type zinc finger.

This sequence belongs to the eukaryotic ribosomal protein eS27 family. In terms of assembly, part of the 30S ribosomal subunit. It depends on Zn(2+) as a cofactor.

The protein is Small ribosomal subunit protein eS27 of Methanoregula boonei (strain DSM 21154 / JCM 14090 / 6A8).